The primary structure comprises 683 residues: Methionine--tRNA ligase (683 aa).

A 'HIGH' region motif is present at residues 14–24 (PYANGSIHLGH). The Zn(2+) site is built by Cys-145, Cys-148, Cys-158, and Cys-161. Residues 331–335 (KMSKS) carry the 'KMSKS' region motif. Lys-334 contacts ATP. Residues 545–572 (ASKEDLTASQTDTGAAAPAGNGELAKDP) form a disordered region. Positions 581-683 (TFAAVDLRVA…SGAKPGQRIK (103 aa)) constitute a tRNA-binding domain.

The protein belongs to the class-I aminoacyl-tRNA synthetase family. MetG type 1 subfamily. Homodimer. Requires Zn(2+) as cofactor.

It is found in the cytoplasm. It carries out the reaction tRNA(Met) + L-methionine + ATP = L-methionyl-tRNA(Met) + AMP + diphosphate. In terms of biological role, is required not only for elongation of protein synthesis but also for the initiation of all mRNA translation through initiator tRNA(fMet) aminoacylation. The polypeptide is Methionine--tRNA ligase (Pseudomonas fluorescens (strain Pf0-1)).